Here is a 251-residue protein sequence, read N- to C-terminus: CDP-diacylglycerol pyrophosphatase (251 aa).

A helical membrane pass occupies residues 4-24; it reads AGLLFLVMIVIAVVAAGIGYW.

It belongs to the Cdh family.

It is found in the cell inner membrane. It catalyses the reaction a CDP-1,2-diacyl-sn-glycerol + H2O = a 1,2-diacyl-sn-glycero-3-phosphate + CMP + 2 H(+). It functions in the pathway phospholipid metabolism; CDP-diacylglycerol degradation; phosphatidate from CDP-diacylglycerol: step 1/1. The sequence is that of CDP-diacylglycerol pyrophosphatase from Escherichia coli O9:H4 (strain HS).